The sequence spans 458 residues: Zinc finger protein 239 (458 aa).

A Glycyl lysine isopeptide (Lys-Gly) (interchain with G-Cter in SUMO2) cross-link involves residue Lys-108. Position 191 is a phosphoserine (Ser-191). 9 consecutive C2H2-type zinc fingers follow at residues 207 to 229 (YECSQCGKNFSQSSELLLHQRDH), 235 to 257 (YKCEQCGKGFTRSSSLLIHQAVH), 263 to 285 (YKCDKCGKGFTRSSSLLIHHAVH), 291 to 313 (YKCDKCGKGFSQSSKLHIHQRVH), 319 to 341 (YECEECGMSFSQRSNLHIHQRVH), 347 to 369 (YKCGECGKGFSQSSNLHIHRCIH), 375 to 397 (YQCYECGKGFSQSSDLRIHLRVH), 403 to 425 (YHCGKCGKGFSQSSKLLIHQRVH), and 431 to 453 (YECSKCGKGFSQSSNLHIHQRVH).

The protein belongs to the krueppel C2H2-type zinc-finger protein family.

The protein localises to the nucleus. Its function is as follows. May be involved in transcriptional regulation. The sequence is that of Zinc finger protein 239 (ZNF239) from Homo sapiens (Human).